We begin with the raw amino-acid sequence, 438 residues long: UPF0597 protein YE0448 (438 aa).

It belongs to the UPF0597 family.

This Yersinia enterocolitica serotype O:8 / biotype 1B (strain NCTC 13174 / 8081) protein is UPF0597 protein YE0448.